A 165-amino-acid chain; its full sequence is MKTSRLPIAIQQAVMRGLREKLAQANLKLGRNYPEPKLSYTQRGTSAGTAWLESYEIRLNPVLLLENSEAFIEEVVPHELAHLLVWKHFGRVAPHGKEWKWMMESVLGVPARRTHQFELQSVRRNTFPYRCKCQEHQLTVRRHNRVVRGEAVYRCVHCGEQLVAK.

The SprT-like domain occupies E20–V163. H78 contributes to the Zn(2+) binding site. E79 is an active-site residue. Residue H82 coordinates Zn(2+).

It belongs to the SprT family. Zn(2+) is required as a cofactor.

It is found in the cytoplasm. This is Protein SprT from Shigella sonnei (strain Ss046).